Consider the following 362-residue polypeptide: Phosphoserine aminotransferase (362 aa).

L-glutamate-binding residues include Ser9 and Arg42. Pyridoxal 5'-phosphate-binding positions include 76–77 (GR), Trp102, Thr153, Asp174, and Gln197. Residue Lys198 is modified to N6-(pyridoxal phosphate)lysine. Pyridoxal 5'-phosphate is bound at residue 239 to 240 (NT).

Belongs to the class-V pyridoxal-phosphate-dependent aminotransferase family. SerC subfamily. Homodimer. The cofactor is pyridoxal 5'-phosphate.

The protein resides in the cytoplasm. It catalyses the reaction O-phospho-L-serine + 2-oxoglutarate = 3-phosphooxypyruvate + L-glutamate. It carries out the reaction 4-(phosphooxy)-L-threonine + 2-oxoglutarate = (R)-3-hydroxy-2-oxo-4-phosphooxybutanoate + L-glutamate. It functions in the pathway amino-acid biosynthesis; L-serine biosynthesis; L-serine from 3-phospho-D-glycerate: step 2/3. It participates in cofactor biosynthesis; pyridoxine 5'-phosphate biosynthesis; pyridoxine 5'-phosphate from D-erythrose 4-phosphate: step 3/5. Functionally, catalyzes the reversible conversion of 3-phosphohydroxypyruvate to phosphoserine and of 3-hydroxy-2-oxo-4-phosphonooxybutanoate to phosphohydroxythreonine. The protein is Phosphoserine aminotransferase of Escherichia coli (strain ATCC 8739 / DSM 1576 / NBRC 3972 / NCIMB 8545 / WDCM 00012 / Crooks).